The chain runs to 119 residues: Large ribosomal subunit protein uL18 (119 aa).

Belongs to the universal ribosomal protein uL18 family. Part of the 50S ribosomal subunit; part of the 5S rRNA/L5/L18/L25 subcomplex. Contacts the 5S and 23S rRNAs.

Its function is as follows. This is one of the proteins that bind and probably mediate the attachment of the 5S RNA into the large ribosomal subunit, where it forms part of the central protuberance. This Nitratidesulfovibrio vulgaris (strain DP4) (Desulfovibrio vulgaris) protein is Large ribosomal subunit protein uL18.